A 52-amino-acid chain; its full sequence is Large ribosomal subunit protein bL33 (52 aa).

This sequence belongs to the bacterial ribosomal protein bL33 family.

The chain is Large ribosomal subunit protein bL33 from Campylobacter jejuni subsp. jejuni serotype O:6 (strain 81116 / NCTC 11828).